The following is a 311-amino-acid chain: Malate dehydrogenase (311 aa).

NAD(+) is bound by residues 7–13 (GAAGGIG) and D34. Substrate is bound by residues R81 and R87. Residues N94 and 117–119 (ITN) contribute to the NAD(+) site. 2 residues coordinate substrate: N119 and R153. Catalysis depends on H177, which acts as the Proton acceptor. M227 is a binding site for NAD(+).

It belongs to the LDH/MDH superfamily. MDH type 1 family. Homodimer.

The catalysed reaction is (S)-malate + NAD(+) = oxaloacetate + NADH + H(+). In terms of biological role, catalyzes the reversible oxidation of malate to oxaloacetate. The protein is Malate dehydrogenase of Aliivibrio fischeri (strain MJ11) (Vibrio fischeri).